We begin with the raw amino-acid sequence, 317 residues long: Phospholipase A1 1 (317 aa).

Residues 1 to 7 (RLIMFVG) form the signal peptide. A propeptide spanning residues 8–17 (DPSSSNELDR) is cleaved from the precursor. Residues C21 and C104 are joined by a disulfide bond. N25 is a glycosylation site (N-linked (GlcNAc...) asparagine). Catalysis depends on S154, which acts as the Nucleophile. D182 (charge relay system) is an active-site residue. A disulfide bond links C193 and C198. Residue N229 is glycosylated (N-linked (GlcNAc...) asparagine). An intrachain disulfide couples C236 to C244. The active-site Charge relay system is the H246. Cystine bridges form between C261–C285, C262–C310, and C278–C283.

This sequence belongs to the AB hydrolase superfamily. Lipase family. In terms of tissue distribution, expressed by the venom gland.

Its subcellular location is the secreted. It carries out the reaction a 1,2-diacyl-sn-glycero-3-phosphocholine + H2O = a 2-acyl-sn-glycero-3-phosphocholine + a fatty acid + H(+). Functionally, catalyzes the hydrolysis of phosphatidylcholine with phospholipase A1 activity. May act as an allergen and induce hemolytic activity. This Dolichovespula maculata (Bald-faced hornet) protein is Phospholipase A1 1.